Here is a 79-residue protein sequence, read N- to C-terminus: Cytochrome b (79 aa).

The next 3 membrane-spanning stretches (helical) occupy residues 1 to 7 (SALFLAM), 31 to 52 (WLIRYIHANGASLFFICLYLHI), and 67 to 79 (WNIGIILLILTMA). Positions 37 and 51 each coordinate heme b.

The protein belongs to the cytochrome b family. As to quaternary structure, the cytochrome bc1 complex contains 11 subunits: 3 respiratory subunits (MT-CYB, CYC1 and UQCRFS1), 2 core proteins (UQCRC1 and UQCRC2) and 6 low-molecular weight proteins (UQCRH/QCR6, UQCRB/QCR7, UQCRQ/QCR8, UQCR10/QCR9, UQCR11/QCR10 and a cleavage product of UQCRFS1). This cytochrome bc1 complex then forms a dimer. Heme b serves as cofactor.

It localises to the mitochondrion inner membrane. Component of the ubiquinol-cytochrome c reductase complex (complex III or cytochrome b-c1 complex) that is part of the mitochondrial respiratory chain. The b-c1 complex mediates electron transfer from ubiquinol to cytochrome c. Contributes to the generation of a proton gradient across the mitochondrial membrane that is then used for ATP synthesis. The sequence is that of Cytochrome b (MT-CYB) from Dipodomys heermanni (Heermann's kangaroo rat).